The chain runs to 142 residues: Mini-ribonuclease 3 (142 aa).

The active site involves D33.

Belongs to the MrnC RNase family. As to quaternary structure, homodimer. Requires Mg(2+) as cofactor.

The protein localises to the cytoplasm. Its function is as follows. Involved in correct processing of both the 5' and 3' ends of 23S rRNA precursor. Processes 30S rRNA precursor transcript even in absence of ribonuclease 3 (Rnc); Rnc processes 30S rRNA into smaller rRNA precursors. In Thermoanaerobacter sp. (strain X514), this protein is Mini-ribonuclease 3.